The following is a 621-amino-acid chain: Solute carrier family 2, facilitated glucose transporter member 12 (621 aa).

Residues 1 to 48 (MVPVENTEGPNLLNQKGTAVETEGSYRASGSRHPPWARGCGMFTFLSS) are Cytoplasmic-facing. The chain crosses the membrane as a helical span at residues 49–69 (VTAAVSGLLVGYELGIISGAL). The Extracellular segment spans residues 70–84 (LQIKTLLTLSCHEQE). Residues 85-105 (MVVSSLLIGALLASLTGGVLI) traverse the membrane as a helical segment. At 106–119 (DRYGRRTAIILSSC) the chain is on the cytoplasmic side. A helical membrane pass occupies residues 120–140 (LLGLGSLVLILSLSYTVLIVG). R141 is a topological domain (extracellular). Residues 142–162 (IAIGVSISLSSIATCVYIAEI) traverse the membrane as a helical segment. At 163-176 (APQHRRGLLVSLNE) the chain is on the cytoplasmic side. Residues 177-197 (LMIVIGILSAYISNYAFANVF) traverse the membrane as a helical segment. Residues 198-201 (HGWK) lie on the Extracellular side of the membrane. Residues 202–222 (YMFGLVIPLGILQAIAMYFLP) form a helical membrane-spanning segment. At 223–282 (PSPRFLVMKGQEGAASKVLGRLRALSDATEELTVIKSSLKDEYQYSFWDLFRSKDNMRTR) the chain is on the cytoplasmic side. Residues 283 to 303 (IMIGLTLVFFVQITGQPNILF) traverse the membrane as a helical segment. At 304-321 (YASTVLKSVGFQSNEAAS) the chain is on the extracellular side. The helical transmembrane segment at 322-342 (LASTGVGVVKVISTIPATLLV) threads the bilayer. The Cytoplasmic segment spans residues 343-349 (DHVGSKT). A helical membrane pass occupies residues 350–370 (FLCIGSSVMAASLVTMGIVNL). The Extracellular segment spans residues 371-470 (NIHMNFTNIC…PAFLKWLSLA (100 aa)). N-linked (GlcNAc...) asparagine glycosylation is found at N375, N387, N400, and N405. The helical transmembrane segment at 471-491 (SLLVYVAAFSIGLGPMPWLVL) threads the bilayer. Residues 492-502 (SEIFPGGIRGR) are Cytoplasmic-facing. A helical membrane pass occupies residues 503-523 (AMALTSSMNWGINLLISLTFL). The Extracellular segment spans residues 524 to 532 (TVTDLIGLP). The chain crosses the membrane as a helical span at residues 533–553 (WVCFIYTIMSLASLLFVVMFI). At 554 to 621 (PETKGCSLEQ…GQSRQLSPEN (68 aa)) the chain is on the cytoplasmic side.

The protein belongs to the major facilitator superfamily. Sugar transporter (TC 2.A.1.1) family. Glucose transporter subfamily.

The protein resides in the cell membrane. Its subcellular location is the endomembrane system. It is found in the cytoplasm. The protein localises to the perinuclear region. The catalysed reaction is D-glucose(out) = D-glucose(in). Insulin-independent facilitative glucose transporter. This chain is Solute carrier family 2, facilitated glucose transporter member 12, found in Macaca fascicularis (Crab-eating macaque).